Consider the following 264-residue polypeptide: 3-methyl-2-oxobutanoate hydroxymethyltransferase (264 aa).

Mg(2+) is bound by residues D45 and D84. 3-methyl-2-oxobutanoate contacts are provided by residues 45-46, D84, and K112; that span reads DS. E114 serves as a coordination point for Mg(2+). Catalysis depends on E181, which acts as the Proton acceptor.

Belongs to the PanB family. As to quaternary structure, homodecamer; pentamer of dimers. Requires Mg(2+) as cofactor.

It is found in the cytoplasm. The enzyme catalyses 3-methyl-2-oxobutanoate + (6R)-5,10-methylene-5,6,7,8-tetrahydrofolate + H2O = 2-dehydropantoate + (6S)-5,6,7,8-tetrahydrofolate. It participates in cofactor biosynthesis; (R)-pantothenate biosynthesis; (R)-pantoate from 3-methyl-2-oxobutanoate: step 1/2. Its function is as follows. Catalyzes the reversible reaction in which hydroxymethyl group from 5,10-methylenetetrahydrofolate is transferred onto alpha-ketoisovalerate to form ketopantoate. The sequence is that of 3-methyl-2-oxobutanoate hydroxymethyltransferase from Shigella dysenteriae serotype 1 (strain Sd197).